Consider the following 361-residue polypeptide: Chorismate synthase (361 aa).

Arg-47 contributes to the NADP(+) binding site. Residues 124 to 126 (RAS), Gly-286, 301 to 305 (KPTAT), and Arg-327 each bind FMN.

It belongs to the chorismate synthase family. In terms of assembly, homotetramer. The cofactor is FMNH2.

It carries out the reaction 5-O-(1-carboxyvinyl)-3-phosphoshikimate = chorismate + phosphate. The protein operates within metabolic intermediate biosynthesis; chorismate biosynthesis; chorismate from D-erythrose 4-phosphate and phosphoenolpyruvate: step 7/7. Catalyzes the anti-1,4-elimination of the C-3 phosphate and the C-6 proR hydrogen from 5-enolpyruvylshikimate-3-phosphate (EPSP) to yield chorismate, which is the branch point compound that serves as the starting substrate for the three terminal pathways of aromatic amino acid biosynthesis. This reaction introduces a second double bond into the aromatic ring system. The protein is Chorismate synthase of Prochlorococcus marinus (strain NATL2A).